Reading from the N-terminus, the 818-residue chain is MAGNGKDKEVDKSPSVSTLKLLGKRLFNSSSHTDNSSLLLSAEQLGNGRSLRKRPTSPSISGSGSGGNSPSSSAGARQRSASLHRRKNNASVGFSNGSVSSHKSSVALQDLIKHNNNPYLNSPSDILGTGTGIASTRDRDRAVLDREKEKERARNKERNTHHAGLPQRSNSMASHHFPNENIVYNPYGISPNHARPDTAFADTLNTNKENDLSFYMHDGNSKIRMLPLPIANPNDFLPEDMKQYSVHLTDNFVFDTDNKPIGSGGSSEVRKVKSSYRQKDVYALKKLNMIYHESPEKFYKRCSKEFIIAKHLSHNVHITNTFYLLKVPTTTYTTRGWGFIMELGVKDLFQLMERTGWKNVPFNEKYCLFKQVAQGIKFCHDNGIAHRDLKPENVLISKEGICKLTDFGISDWYHVIPHDYTSPVKTCQGMIGSPPYTPPEVMYFDAKKHYPEKFQKPYNPLAMDSYALGIMLITMINNIIPFIDSCNTDARFREFEVSYDNFINHQNPHFRDKGCHKPGPGSEYSLARNFKNTDATRIAWRLADPNPATRYTMDDLFNDPFFQQIETCVEPNDDDLVRVPELRKSTSTNDFSENSLDAPHDQEVIHTSNPFLKKETLTSKPRSMLEIAESPSLKQKSKVKDSAKTKTHDVGDEGGNESTKPKQQDKKENLKKDEVKNGDKDKVIEEATTTNVDSILEKPTPTSTKVEDNLSEDDSTMKELKSMLNSTPTTPTHNGPTPLPAKAGTQLDKRMSDLSLKSETPASTKNFSAPNVSSSSNSLRSLGSPSVSSSKKKKVIHHHLDITNSVTNMSSVSAFISR.

Residues 28–39 (NSSSHTDNSSLL) are compositionally biased toward polar residues. 2 disordered regions span residues 28-100 (NSSS…GSVS) and 117-177 (NPYL…SHHF). T56 is modified (phosphothreonine). Residues 57–81 (SPSISGSGSGGNSPSSSAGARQRSA) are compositionally biased toward low complexity. A phosphoserine mark is found at S59 and S80. The segment covering 136–160 (TRDRDRAVLDREKEKERARNKERNT) has biased composition (basic and acidic residues). The 308-residue stretch at 255-562 (DTDNKPIGSG…MDDLFNDPFF (308 aa)) folds into the Protein kinase domain. ATP-binding positions include 261-269 (IGSGGSSEV) and K285. Catalysis depends on D388, which acts as the Proton acceptor. Polar residues predominate over residues 585-595 (STSTNDFSENS). The disordered stretch occupies residues 585 to 795 (STSTNDFSEN…SVSSSKKKKV (211 aa)). S623 and S632 each carry phosphoserine. Composition is skewed to basic and acidic residues over residues 638 to 651 (KVKD…HDVG) and 659 to 685 (TKPK…KVIE). S694 bears the Phosphoserine mark. The residue at position 700 (T700) is a Phosphothreonine. S711 is subject to Phosphoserine. Over residues 727–736 (TPTTPTHNGP) the composition is skewed to low complexity. A Phosphothreonine modification is found at T737. A phosphoserine mark is found at S752, S755, S778, and S781. The segment covering 755 to 767 (SLKSETPASTKNF) has biased composition (polar residues). Residues 768-789 (SAPNVSSSSNSLRSLGSPSVSS) are compositionally biased toward low complexity.

The protein belongs to the protein kinase superfamily. Ser/Thr protein kinase family.

The protein resides in the nucleus. Its subcellular location is the cytoplasm. The catalysed reaction is L-seryl-[protein] + ATP = O-phospho-L-seryl-[protein] + ADP + H(+). It catalyses the reaction L-threonyl-[protein] + ATP = O-phospho-L-threonyl-[protein] + ADP + H(+). Essential determinant for high-affinity spermidine transport. Required for the activation of the plasma membrane proton pump PMA1 via phosphorylation of 'Ser-899'. The protein is Serine/threonine-protein kinase PTK2/STK2 (PTK2) of Saccharomyces cerevisiae (strain ATCC 204508 / S288c) (Baker's yeast).